Consider the following 373-residue polypeptide: Dual-specificity RNA methyltransferase RlmN (373 aa).

Residue glutamate 101 is the Proton acceptor of the active site. The Radical SAM core domain occupies 107-350; that stretch reads ENKRTTLCVS…TIIRKIRGAD (244 aa). Cysteine 114 and cysteine 355 form a disulfide bridge. Positions 121, 125, and 128 each coordinate [4Fe-4S] cluster. Residues 179–180, serine 211, 233–235, and asparagine 312 each bind S-adenosyl-L-methionine; these read GE and SLH. Cysteine 355 (S-methylcysteine intermediate) is an active-site residue.

Belongs to the radical SAM superfamily. RlmN family. [4Fe-4S] cluster is required as a cofactor.

It is found in the cytoplasm. The catalysed reaction is adenosine(2503) in 23S rRNA + 2 reduced [2Fe-2S]-[ferredoxin] + 2 S-adenosyl-L-methionine = 2-methyladenosine(2503) in 23S rRNA + 5'-deoxyadenosine + L-methionine + 2 oxidized [2Fe-2S]-[ferredoxin] + S-adenosyl-L-homocysteine. It catalyses the reaction adenosine(37) in tRNA + 2 reduced [2Fe-2S]-[ferredoxin] + 2 S-adenosyl-L-methionine = 2-methyladenosine(37) in tRNA + 5'-deoxyadenosine + L-methionine + 2 oxidized [2Fe-2S]-[ferredoxin] + S-adenosyl-L-homocysteine. Functionally, specifically methylates position 2 of adenine 2503 in 23S rRNA and position 2 of adenine 37 in tRNAs. m2A2503 modification seems to play a crucial role in the proofreading step occurring at the peptidyl transferase center and thus would serve to optimize ribosomal fidelity. The sequence is that of Dual-specificity RNA methyltransferase RlmN from Blochmanniella pennsylvanica (strain BPEN).